The chain runs to 1941 residues: Integrin beta-like protein B (1941 aa).

The signal sequence occupies residues Met1–Ala20. Over Thr21–Thr1871 the chain is Extracellular. Positions Tyr420–Ser457 constitute an EGF-like domain. Disulfide bonds link Cys430–Cys445 and Cys447–Cys456. The region spanning Asp513–Leu696 is the VWFA domain. N-linked (GlcNAc...) asparagine glycosylation is found at Asn1400, Asn1505, Asn1530, Asn1606, Asn1652, Asn1738, Asn1777, Asn1848, Asn1866, and Asn1869. Residues Val1872–Trp1892 traverse the membrane as a helical segment. Residues Lys1893–Leu1941 lie on the Cytoplasmic side of the membrane. The interval Met1921–Leu1941 is disordered.

The protein belongs to the SIB family. As to quaternary structure, interacts with talA/talin.

It localises to the membrane. Its function is as follows. Implicated in cellular adhesion. This is Integrin beta-like protein B (sibB) from Dictyostelium discoideum (Social amoeba).